Consider the following 295-residue polypeptide: Bifunctional protein FolD (295 aa).

NADP(+) is bound by residues 166–168, serine 191, and isoleucine 232; that span reads GRS.

The protein belongs to the tetrahydrofolate dehydrogenase/cyclohydrolase family. Homodimer.

The enzyme catalyses (6R)-5,10-methylene-5,6,7,8-tetrahydrofolate + NADP(+) = (6R)-5,10-methenyltetrahydrofolate + NADPH. It catalyses the reaction (6R)-5,10-methenyltetrahydrofolate + H2O = (6R)-10-formyltetrahydrofolate + H(+). Its pathway is one-carbon metabolism; tetrahydrofolate interconversion. Catalyzes the oxidation of 5,10-methylenetetrahydrofolate to 5,10-methenyltetrahydrofolate and then the hydrolysis of 5,10-methenyltetrahydrofolate to 10-formyltetrahydrofolate. This chain is Bifunctional protein FolD, found in Wolbachia sp. subsp. Brugia malayi (strain TRS).